The primary structure comprises 311 residues: D-alanine--D-alanine ligase (311 aa).

Positions 106–301 (KLLWRGAELP…FDELCWRILL (196 aa)) constitute an ATP-grasp domain. Residue 132 to 187 (IGSVGLPLMIKPAHEGSSIGMAKVERPEELEAARAEAARYDDLVLAERWIEGGEYT) participates in ATP binding. The Mg(2+) site is built by aspartate 255, glutamate 268, and asparagine 270.

Belongs to the D-alanine--D-alanine ligase family. Mg(2+) serves as cofactor. Requires Mn(2+) as cofactor.

Its subcellular location is the cytoplasm. It carries out the reaction 2 D-alanine + ATP = D-alanyl-D-alanine + ADP + phosphate + H(+). It participates in cell wall biogenesis; peptidoglycan biosynthesis. Cell wall formation. This Alkalilimnicola ehrlichii (strain ATCC BAA-1101 / DSM 17681 / MLHE-1) protein is D-alanine--D-alanine ligase.